A 63-amino-acid polypeptide reads, in one-letter code: uncharacterized protein (63 aa).

The first 15 residues, 1–15 (MRNPVVWGMIYFAVG), serve as a signal peptide directing secretion. Cys-16 carries N-palmitoyl cysteine lipidation. The S-diacylglycerol cysteine moiety is linked to residue Cys-16. Residues 34–56 (SILLMVFAAYNISISFKMFAFSF) form a helical membrane-spanning segment.

Its subcellular location is the cell membrane. This is an uncharacterized protein from Bacillus subtilis (strain 168).